Reading from the N-terminus, the 160-residue chain is 6,7-dimethyl-8-ribityllumazine synthase (160 aa).

5-amino-6-(D-ribitylamino)uracil-binding positions include Phe-22, 57–59, and 81–83; these read TYE and TII. 86–87 is a binding site for (2S)-2-hydroxy-3-oxobutyl phosphate; the sequence is QT. His-89 acts as the Proton donor in catalysis. Leu-114 contacts 5-amino-6-(D-ribitylamino)uracil. (2S)-2-hydroxy-3-oxobutyl phosphate is bound at residue Arg-128.

The protein belongs to the DMRL synthase family. Forms an icosahedral capsid composed of 60 subunits, arranged as a dodecamer of pentamers.

The catalysed reaction is (2S)-2-hydroxy-3-oxobutyl phosphate + 5-amino-6-(D-ribitylamino)uracil = 6,7-dimethyl-8-(1-D-ribityl)lumazine + phosphate + 2 H2O + H(+). The protein operates within cofactor biosynthesis; riboflavin biosynthesis; riboflavin from 2-hydroxy-3-oxobutyl phosphate and 5-amino-6-(D-ribitylamino)uracil: step 1/2. Its function is as follows. Catalyzes the formation of 6,7-dimethyl-8-ribityllumazine by condensation of 5-amino-6-(D-ribitylamino)uracil with 3,4-dihydroxy-2-butanone 4-phosphate. This is the penultimate step in the biosynthesis of riboflavin. The sequence is that of 6,7-dimethyl-8-ribityllumazine synthase from Buchnera aphidicola subsp. Acyrthosiphon pisum (strain APS) (Acyrthosiphon pisum symbiotic bacterium).